We begin with the raw amino-acid sequence, 840 residues long: Leucine--tRNA ligase (840 aa).

A 'HIGH' region motif is present at residues proline 44 to histidine 55. Residues lysine 617–serine 621 carry the 'KMSKS' region motif. Lysine 620 contacts ATP.

The protein belongs to the class-I aminoacyl-tRNA synthetase family.

It localises to the cytoplasm. The catalysed reaction is tRNA(Leu) + L-leucine + ATP = L-leucyl-tRNA(Leu) + AMP + diphosphate. The chain is Leucine--tRNA ligase from Borreliella afzelii (strain PKo) (Borrelia afzelii).